Consider the following 147-residue polypeptide: D-aminoacyl-tRNA deacylase (147 aa).

Positions 136–137 match the Gly-cisPro motif, important for rejection of L-amino acids motif; the sequence is GP.

This sequence belongs to the DTD family. As to quaternary structure, homodimer.

The protein resides in the cytoplasm. It carries out the reaction glycyl-tRNA(Ala) + H2O = tRNA(Ala) + glycine + H(+). It catalyses the reaction a D-aminoacyl-tRNA + H2O = a tRNA + a D-alpha-amino acid + H(+). An aminoacyl-tRNA editing enzyme that deacylates mischarged D-aminoacyl-tRNAs. Also deacylates mischarged glycyl-tRNA(Ala), protecting cells against glycine mischarging by AlaRS. Acts via tRNA-based rather than protein-based catalysis; rejects L-amino acids rather than detecting D-amino acids in the active site. By recycling D-aminoacyl-tRNA to D-amino acids and free tRNA molecules, this enzyme counteracts the toxicity associated with the formation of D-aminoacyl-tRNA entities in vivo and helps enforce protein L-homochirality. The protein is D-aminoacyl-tRNA deacylase of Streptococcus pyogenes serotype M1.